The following is a 44-amino-acid chain: Tachystatin-A1 (44 aa).

Cystine bridges form between Cys-4/Cys-24, Cys-11/Cys-29, and Cys-23/Cys-41.

In terms of tissue distribution, granular hemocytes, small secretory granules.

Its subcellular location is the secreted. In terms of biological role, exhibits stronger antimicrobial activity against the Gram-positive bacteria (S.aureus (IC(50) is 4.2 ug/ml)) and fungi (C.albicans (IC(50) is 3.0 ug/ml) and P.pastoris (IC(50) is 0.5 ug/ml)) than Gram-negative bacteria (E.coli (IC(50) is 25 ug/ml)). Binds to chitin (8.4 uM are required to obtain 50% of binding). Does not cause hemolysis on sheep erythrocytes. Has no blocking activity on the P-type calcium channel. The protein is Tachystatin-A1 of Tachypleus tridentatus (Japanese horseshoe crab).